A 68-amino-acid chain; its full sequence is Small ribosomal subunit protein bS21 (68 aa).

The tract at residues 39–68 (PPSVKRVRKKQESERRHRKERAMRRRMMEE) is disordered. Over residues 54–68 (RHRKERAMRRRMMEE) the composition is skewed to basic residues.

This sequence belongs to the bacterial ribosomal protein bS21 family.

This Orientia tsutsugamushi (strain Boryong) (Rickettsia tsutsugamushi) protein is Small ribosomal subunit protein bS21.